The sequence spans 128 residues: Aspartate 1-decarboxylase (128 aa).

Serine 25 (schiff-base intermediate with substrate; via pyruvic acid) is an active-site residue. Pyruvic acid (Ser) is present on serine 25. Threonine 57 is a substrate binding site. The Proton donor role is filled by tyrosine 58. Residue 73–75 coordinates substrate; sequence GAA.

This sequence belongs to the PanD family. In terms of assembly, heterooctamer of four alpha and four beta subunits. Requires pyruvate as cofactor. Is synthesized initially as an inactive proenzyme, which is activated by self-cleavage at a specific serine bond to produce a beta-subunit with a hydroxyl group at its C-terminus and an alpha-subunit with a pyruvoyl group at its N-terminus.

The protein localises to the cytoplasm. It carries out the reaction L-aspartate + H(+) = beta-alanine + CO2. Its pathway is cofactor biosynthesis; (R)-pantothenate biosynthesis; beta-alanine from L-aspartate: step 1/1. Catalyzes the pyruvoyl-dependent decarboxylation of aspartate to produce beta-alanine. The polypeptide is Aspartate 1-decarboxylase (Moorella thermoacetica (strain ATCC 39073 / JCM 9320)).